Consider the following 533-residue polypeptide: MHWADATSEKIMKKRNAEEYVVSSGITPSGHIHIGNARETLTADAVYKGMLKKGAEAKLIFIADDYDPLRKLYPFLPKEFEKYIGMPLSEIPCPQGCCKSYADHFLMPFLNSLEDLGVEITTHRANECYKAGMYNDAIITALENRLKIKELLDSYRKEPLADDWYPLNVVCEKCGKMHETKVINYNSEDKTITYVCKCGFENTVKPFNGIGKLPWRVDWPARWNIFGVTAEPMGKDHAASGGSYDTGIKIARQIFNYQAPEKMVYEWIQLKVGDKAMPMSSSSGVVFAVKDWTEICHPEVLRFLILKGKPTKHIDFDLKAISNLVDDYDELERKYFELIEKQKTEELNDNENEKISLYELVTPKIPERLPLQVAYRFCSIIAQIALDKETQKIDMERVFDILGRNGYNPAEFSEYDKSRLEKRLYMSKKWASDYGENLEINDLDQAKEQYETLSEEQKAWLKAFSKEVENIEIDANTIHELMYETATKLNLAPKEAFVASYKILLGKNYGPKLGSFLASLKKEFVIGRFNLTE.

Positions 28 to 36 (PSGHIHIGN) match the 'HIGH' region motif. The short motif at 278–282 (PMSSS) is the 'KMSKS' region element.

This sequence belongs to the class-I aminoacyl-tRNA synthetase family.

The protein resides in the cytoplasm. The enzyme catalyses tRNA(Lys) + L-lysine + ATP = L-lysyl-tRNA(Lys) + AMP + diphosphate. The sequence is that of Lysine--tRNA ligase (lysS) from Methanococcus maripaludis (strain DSM 14266 / JCM 13030 / NBRC 101832 / S2 / LL).